Reading from the N-terminus, the 620-residue chain is Altered inheritance of mitochondria protein 9, mitochondrial (620 aa).

The N-terminal 35 residues, 1-35 (MLSRVARNSSLLKQLPKLRQTTVLPVVLKNSIRFH), are a transit peptide targeting the mitochondrion.

It belongs to the AIM9 family.

Its subcellular location is the mitochondrion. This Candida tropicalis (strain ATCC MYA-3404 / T1) (Yeast) protein is Altered inheritance of mitochondria protein 9, mitochondrial (AIM9).